Here is a 478-residue protein sequence, read N- to C-terminus: Cysteine--tRNA ligase (478 aa).

C27 is a Zn(2+) binding site. The 'HIGH' region signature appears at 29 to 39; the sequence is PTTYNFIHLGN. C207, H232, and E236 together coordinate Zn(2+). The 'KMSKS' region motif lies at 264 to 268; the sequence is KMSKS. Residue K267 coordinates ATP.

This sequence belongs to the class-I aminoacyl-tRNA synthetase family. As to quaternary structure, monomer. Zn(2+) serves as cofactor.

Its subcellular location is the cytoplasm. The enzyme catalyses tRNA(Cys) + L-cysteine + ATP = L-cysteinyl-tRNA(Cys) + AMP + diphosphate. The polypeptide is Cysteine--tRNA ligase (Desulforudis audaxviator (strain MP104C)).